We begin with the raw amino-acid sequence, 108 residues long: Large ribosomal subunit protein P2A (108 aa).

The disordered stretch occupies residues 62–108 (LSSVPSGAPAAAAGGASAAAGGEATEEAAEEEAAEESDDDMSFGLFD). The segment covering 68–84 (GAPAAAAGGASAAAGGE) has biased composition (low complexity). A compositionally biased stretch (acidic residues) spans 85–102 (ATEEAAEEEAAEESDDDM). S98 is subject to Phosphoserine.

This sequence belongs to the eukaryotic ribosomal protein P1/P2 family.

Functionally, plays an important role in the elongation step of protein synthesis. This is Large ribosomal subunit protein P2A (RPP2A) from Candida albicans (Yeast).